Consider the following 139-residue polypeptide: uncharacterized protein (139 aa).

In terms of domain architecture, HIT spans I3–I110. The Histidine triad motif motif lies at H95 to H99.

This is an uncharacterized protein from Saccharolobus solfataricus (strain ATCC 35092 / DSM 1617 / JCM 11322 / P2) (Sulfolobus solfataricus).